Here is an 85-residue protein sequence, read N- to C-terminus: Large ribosomal subunit protein bL27 (85 aa).

The tract at residues 1-22 (MAHKKAGGSSRNGRDSESKRLG) is disordered.

It belongs to the bacterial ribosomal protein bL27 family.

This Tolumonas auensis (strain DSM 9187 / NBRC 110442 / TA 4) protein is Large ribosomal subunit protein bL27.